The following is a 206-amino-acid chain: MKVLGIDEAGRGPVIGPLVVAGVMIPERKFSILRKMGVKDSKKLTPERRRFLARKIRRIARVFTVKISASDIDRMRERGFNLNEIEKIAIKRIIPEAQPDRVIIDSVDVKPERLEEEIRSHFGEIEVTAEHGADTRYYPVAAASIIAKVERDLEIESIQKKNRKLGDIGSGYPSDPRTREFLESFTYDELPDFVRRSWATVQKKKQ.

Residues 1 to 206 (MKVLGIDEAG…SWATVQKKKQ (206 aa)) enclose the RNase H type-2 domain. The a divalent metal cation site is built by aspartate 7, glutamate 8, and aspartate 105.

This sequence belongs to the RNase HII family. Mn(2+) serves as cofactor. Mg(2+) is required as a cofactor.

The protein localises to the cytoplasm. The enzyme catalyses Endonucleolytic cleavage to 5'-phosphomonoester.. Its function is as follows. Endonuclease that specifically degrades the RNA of RNA-DNA hybrids. The protein is Ribonuclease HII (rnhB) of Methanothermobacter thermautotrophicus (strain ATCC 29096 / DSM 1053 / JCM 10044 / NBRC 100330 / Delta H) (Methanobacterium thermoautotrophicum).